A 259-amino-acid chain; its full sequence is Glucosamine-6-phosphate deaminase (259 aa).

Residue Asp-66 is the Proton acceptor; for enolization step of the active site. The active-site For ring-opening step is Asp-135. The active-site Proton acceptor; for ring-opening step is the His-137. The For ring-opening step role is filled by Glu-142.

It belongs to the glucosamine/galactosamine-6-phosphate isomerase family. NagB subfamily.

The catalysed reaction is alpha-D-glucosamine 6-phosphate + H2O = beta-D-fructose 6-phosphate + NH4(+). It functions in the pathway amino-sugar metabolism; N-acetylneuraminate degradation; D-fructose 6-phosphate from N-acetylneuraminate: step 5/5. In terms of biological role, catalyzes the reversible isomerization-deamination of glucosamine 6-phosphate (GlcN6P) to form fructose 6-phosphate (Fru6P) and ammonium ion. The protein is Glucosamine-6-phosphate deaminase of Rhodococcus opacus (strain B4).